We begin with the raw amino-acid sequence, 214 residues long: Nascent polypeptide-associated complex subunit alpha (214 aa).

Disordered stretches follow at residues 1–57 and 119–179; these read MSNP…NEKK and ASAA…EDKD. Over residues 22 to 38 the composition is skewed to acidic residues; it reads AEDEGSDSSDSEGEGEV. The 66-residue stretch at 52 to 117 folds into the NAC-A/B domain; it reads SRNEKKARKS…AKIEDLNSQA (66 aa). Residues 119-128 show a composition bias toward low complexity; sequence ASAAAQLAAQ. Residues 129–159 are compositionally biased toward basic and acidic residues; that stretch reads ESHDHAGHDHSGHDHSHDHGKGKAVDTGDEK. Positions 160-171 are enriched in acidic residues; the sequence is KEEEEDDTEEVD. Residues 175–214 enclose the UBA domain; the sequence is LEDKDIELVMTQASVSRNKAVKALKENDNDIVNSIMALSI.

Belongs to the NAC-alpha family. In terms of assembly, part of the nascent polypeptide-associated complex (NAC), consisting of EGD2 and EGD1. NAC associates with ribosomes via EGD1.

It is found in the cytoplasm. It localises to the nucleus. Functionally, component of the nascent polypeptide-associated complex (NAC), a dynamic component of the ribosomal exit tunnel, protecting the emerging polypeptides from interaction with other cytoplasmic proteins to ensure appropriate nascent protein targeting. The NAC complex also promotes mitochondrial protein import by enhancing productive ribosome interactions with the outer mitochondrial membrane and blocks the inappropriate interaction of ribosomes translating non-secretory nascent polypeptides with translocation sites in the membrane of the endoplasmic reticulum. EGD2 may also be involved in transcription regulation. The sequence is that of Nascent polypeptide-associated complex subunit alpha (egd2) from Sclerotinia sclerotiorum (strain ATCC 18683 / 1980 / Ss-1) (White mold).